The following is a 344-amino-acid chain: Lipase chaperone (344 aa).

Residues 14–34 (AMVYGVVGLAAIAGVAMWSGA) form a helical membrane-spanning segment.

It belongs to the lipase chaperone family.

The protein resides in the cell inner membrane. In terms of biological role, may be involved in the folding of the extracellular lipase during its passage through the periplasm. This chain is Lipase chaperone, found in Burkholderia lata (strain ATCC 17760 / DSM 23089 / LMG 22485 / NCIMB 9086 / R18194 / 383).